A 252-amino-acid chain; its full sequence is Small ribosomal subunit protein uS3 (252 aa).

A KH type-2 domain is found at 39–111 (IRKLINNFAK…EVNLNVLEVK (73 aa)). Positions 222 to 252 (KPFASQSSNTPNRRPRNFKGGNNNHVNAKKN) are disordered. Polar residues predominate over residues 241–252 (GGNNNHVNAKKN).

It belongs to the universal ribosomal protein uS3 family. Part of the 30S ribosomal subunit. Forms a tight complex with proteins S10 and S14.

Binds the lower part of the 30S subunit head. Binds mRNA in the 70S ribosome, positioning it for translation. The chain is Small ribosomal subunit protein uS3 from Phytoplasma sp. (strain STRAWB2).